The chain runs to 512 residues: NAD(P) transhydrogenase subunit alpha (512 aa).

Residues 1 to 400 (MLIGVPRELL…KESKPTDPRV (400 aa)) are Cytoplasmic-facing. Residues 125-128 (QALD), Val-175, 195-197 (DSR), and Gly-225 contribute to the NAD(+) site. The segment at 375 to 394 (SAQPKQETKAAPVAEKKESK) is disordered. 2 helical membrane-spanning segments follow: residues 401–421 (KYGV…VAPA) and 422–442 (AFLS…YVVW). Residues 443–451 (NVSHALHTP) lie on the Cytoplasmic side of the membrane. Residues 452-472 (LMAVTNAISGIIIVGALLQIR) traverse the membrane as a helical segment. At 473–478 (QPTGNL) the chain is on the periplasmic side. The helical transmembrane segment at 479-499 (FIDALAFVAILVASINIFGGF) threads the bilayer. Over 500 to 512 (RVTQRMLAMFRKG) the chain is Cytoplasmic.

The protein belongs to the AlaDH/PNT family. In terms of assembly, heterodimer of an alpha (PntA) and a beta (PntB) chain.

It is found in the cell inner membrane. It catalyses the reaction NAD(+) + NADPH + H(+)(in) = NADH + NADP(+) + H(+)(out). Functionally, the transhydrogenation between NADH and NADP is coupled to respiration and ATP hydrolysis and functions as a proton pump across the membrane. The polypeptide is NAD(P) transhydrogenase subunit alpha (pntA) (Haemophilus influenzae (strain ATCC 51907 / DSM 11121 / KW20 / Rd)).